A 61-amino-acid chain; its full sequence is Photosystem II reaction center protein K (61 aa).

A propeptide spanning residues 1-24 (MLNIFSLMYICLNSALYSSSFLFA) is cleaved from the precursor. Residues 40–60 (MPVIPVLFFLLAFVWQAAVSF) traverse the membrane as a helical segment.

The protein belongs to the PsbK family. PSII is composed of 1 copy each of membrane proteins PsbA, PsbB, PsbC, PsbD, PsbE, PsbF, PsbH, PsbI, PsbJ, PsbK, PsbL, PsbM, PsbT, PsbX, PsbY, PsbZ, Psb30/Ycf12, at least 3 peripheral proteins of the oxygen-evolving complex and a large number of cofactors. It forms dimeric complexes.

It is found in the plastid. Its subcellular location is the chloroplast thylakoid membrane. Functionally, one of the components of the core complex of photosystem II (PSII). PSII is a light-driven water:plastoquinone oxidoreductase that uses light energy to abstract electrons from H(2)O, generating O(2) and a proton gradient subsequently used for ATP formation. It consists of a core antenna complex that captures photons, and an electron transfer chain that converts photonic excitation into a charge separation. The chain is Photosystem II reaction center protein K from Citrus sinensis (Sweet orange).